The sequence spans 476 residues: Tryptophan--tRNA ligase, cytoplasmic (476 aa).

Residues 1-117 (MADMSNGEQG…LIVRFGSSKI (117 aa)) are dispensable to the catalytic activity. The WHEP-TRS domain maps to 13-69 (SPLELFHSIAAQGELVRDLKARNAAKDEIDSAVKMLLSLKTSYKAATGEDYKVDCPP). A disordered region spans residues 63 to 83 (YKVDCPPGDPAPESGEGLDAT). Residue K159 is modified to N6-succinyllysine. The short motif at 169-178 (PSSEAMHVGH) is the 'HIGH' region element. The 'KMSKS' region signature appears at 354 to 358 (KMSAS). S356 is modified (phosphoserine).

Belongs to the class-I aminoacyl-tRNA synthetase family. As to quaternary structure, homodimer. Interacts with oxidized form of GAPDH. Proteolytic cleavage generates 2 forms; T1-TrpRS and T2-TrpRS.

It is found in the cytoplasm. The catalysed reaction is tRNA(Trp) + L-tryptophan + ATP = L-tryptophyl-tRNA(Trp) + AMP + diphosphate + H(+). Functionally, T1-TrpRS has aminoacylation activity while T2-TrpRS lacks it. T1-TrpRS and T2-TrpRS possess angiostatic activity. T2-TrpRS inhibits fluid shear stress-activated responses of endothelial cells. Regulates ERK, Akt, and eNOS activation pathways that are associated with angiogenesis, cytoskeletal reorganization and shear stress-responsive gene expression. In Bos taurus (Bovine), this protein is Tryptophan--tRNA ligase, cytoplasmic (WARS1).